A 394-amino-acid polypeptide reads, in one-letter code: Sorting nexin-3 (394 aa).

Disordered stretches follow at residues 1-82 and 116-226; these read MAFY…FGGA and LGGA…SATA. Composition is skewed to low complexity over residues 31-82 and 131-178; these read AAPG…FGGA and AHSS…AFPS. A compositionally biased stretch (polar residues) spans 179 to 207; sequence GVSTSQYQPTSQGAQGASRFQSHTPSTLL. A PX domain is found at 272-389; it reads NFLEVEVRSP…AAFLQDSGWS (118 aa). Residues R315, S317, K341, R346, and R355 each coordinate a 1,2-diacyl-sn-glycero-3-phospho-(1D-myo-inositol-3-phosphate).

This sequence belongs to the sorting nexin family.

The protein resides in the cytoplasm. It is found in the golgi apparatus membrane. The protein localises to the prevacuolar compartment membrane. In terms of biological role, required for retention of late Golgi membrane proteins. Component of the retrieval machinery that functions by direct interaction with the cytosolic tails of certain TGN membrane proteins during the sorting/budding process at the prevacuolar compartment. Binds phosphatidylinositol 3-phosphate (PtdIns(P3)). This chain is Sorting nexin-3 (SNX3), found in Mycosarcoma maydis (Corn smut fungus).